A 290-amino-acid chain; its full sequence is 33 kDa chaperonin (290 aa).

Intrachain disulfides connect cysteine 231–cysteine 233 and cysteine 263–cysteine 266.

This sequence belongs to the HSP33 family. Post-translationally, under oxidizing conditions two disulfide bonds are formed involving the reactive cysteines. Under reducing conditions zinc is bound to the reactive cysteines and the protein is inactive.

The protein localises to the cytoplasm. In terms of biological role, redox regulated molecular chaperone. Protects both thermally unfolding and oxidatively damaged proteins from irreversible aggregation. Plays an important role in the bacterial defense system toward oxidative stress. The sequence is that of 33 kDa chaperonin from Thermotoga sp. (strain RQ2).